An 85-amino-acid chain; its full sequence is Small ribosomal subunit protein bS18A (85 aa).

The protein belongs to the bacterial ribosomal protein bS18 family. As to quaternary structure, part of the 30S ribosomal subunit. Forms a tight heterodimer with protein bS6.

Binds as a heterodimer with protein bS6 to the central domain of the 16S rRNA, where it helps stabilize the platform of the 30S subunit. The sequence is that of Small ribosomal subunit protein bS18A from Mycolicibacterium smegmatis (strain ATCC 700084 / mc(2)155) (Mycobacterium smegmatis).